The following is a 506-amino-acid chain: Lysine--tRNA ligase (506 aa).

Residues Glu-416 and Glu-423 each coordinate Mg(2+).

The protein belongs to the class-II aminoacyl-tRNA synthetase family. In terms of assembly, homodimer. It depends on Mg(2+) as a cofactor.

It localises to the cytoplasm. The catalysed reaction is tRNA(Lys) + L-lysine + ATP = L-lysyl-tRNA(Lys) + AMP + diphosphate. The protein is Lysine--tRNA ligase (lysS) of Xylella fastidiosa (strain 9a5c).